The sequence spans 289 residues: Ribosomal protein L11 methyltransferase (289 aa).

S-adenosyl-L-methionine-binding residues include Thr-135, Gly-156, Asp-179, and Asn-225.

Belongs to the methyltransferase superfamily. PrmA family.

The protein resides in the cytoplasm. The enzyme catalyses L-lysyl-[protein] + 3 S-adenosyl-L-methionine = N(6),N(6),N(6)-trimethyl-L-lysyl-[protein] + 3 S-adenosyl-L-homocysteine + 3 H(+). In terms of biological role, methylates ribosomal protein L11. The chain is Ribosomal protein L11 methyltransferase from Chlorobaculum tepidum (strain ATCC 49652 / DSM 12025 / NBRC 103806 / TLS) (Chlorobium tepidum).